A 316-amino-acid chain; its full sequence is Methionyl-tRNA formyltransferase (316 aa).

Position 112-115 (112-115 (SLLP)) interacts with (6S)-5,6,7,8-tetrahydrofolate.

It belongs to the Fmt family.

It carries out the reaction L-methionyl-tRNA(fMet) + (6R)-10-formyltetrahydrofolate = N-formyl-L-methionyl-tRNA(fMet) + (6S)-5,6,7,8-tetrahydrofolate + H(+). Attaches a formyl group to the free amino group of methionyl-tRNA(fMet). The formyl group appears to play a dual role in the initiator identity of N-formylmethionyl-tRNA by promoting its recognition by IF2 and preventing the misappropriation of this tRNA by the elongation apparatus. In Glaesserella parasuis serovar 5 (strain SH0165) (Haemophilus parasuis), this protein is Methionyl-tRNA formyltransferase.